The chain runs to 95 residues: Small ribosomal subunit protein bS16 (95 aa).

This sequence belongs to the bacterial ribosomal protein bS16 family.

This chain is Small ribosomal subunit protein bS16, found in Thermosipho melanesiensis (strain DSM 12029 / CIP 104789 / BI429).